The primary structure comprises 407 residues: Deacetylase Atu3266 (407 aa).

Residues H75, H77, K173, H206, H229, and D289 each coordinate Zn(2+). The residue at position 173 (K173) is an N6-carboxylysine.

It belongs to the metallo-dependent hydrolases superfamily. Atu3266/EF_0837 deacetylase family. As to quaternary structure, homohexamer, dimer of trimers. Requires Zn(2+) as cofactor.

Functionally, esterase that catalyzes the deacetylation of acetyl-(R)-mandelate (in vitro). Can also hydrolyze acetyl glycolate, but with lower efficiency. Has very low N-acetyl-D-amino acid deacetylase activity with N-acetyl-D-serine and N-acetyl-D-threonine (in vitro). Theoretical substrate docking studies suggest that other N-acetylated amino acids may optimally occupy the active site and may in fact be the physiological substrates. This chain is Deacetylase Atu3266, found in Agrobacterium fabrum (strain C58 / ATCC 33970) (Agrobacterium tumefaciens (strain C58)).